A 117-amino-acid polypeptide reads, in one-letter code: Nitrogen regulatory protein GlnK1 (117 aa).

Residues Thr32, 40 to 42 (GAQ), and 92 to 95 (GSGK) contribute to the ADP site. ATP-binding positions include Thr32, 40-42 (GAQ), and 92-95 (GSGK).

Belongs to the P(II) protein family. As to quaternary structure, homotrimer. Interacts and forms stable complexes with the glutamine synthetase GlnA1.

The protein localises to the cytoplasm. Its activity is regulated as follows. Inhibitory effects on GlnA1 are abolished in the presence of the effector 2-oxoglutarate. Its function is as follows. Involved in the regulation of nitrogen metabolism. Regulates the activity of its targets by protein-protein interaction in response to the nitrogen status of the cell. Allows finetuning control of the glutamine synthetase GlnA1 under changing nitrogen availabilities via direct protein interaction. The polypeptide is Nitrogen regulatory protein GlnK1 (Methanosarcina mazei (strain ATCC BAA-159 / DSM 3647 / Goe1 / Go1 / JCM 11833 / OCM 88) (Methanosarcina frisia)).